Here is a 382-residue protein sequence, read N- to C-terminus: MAKPVQIEVWNPNGKYRVVSTKPMPGTRWINLLIEQDCRVEICTEKKTILSVEDILALIGDKCDGVIGQLTEDWGEVLFSALSRAGGKAFSNMAVGYNNVDVNAANKYGVAVGNTPGVLTETTAELAASLSLAAARRIVEADEFMRAGRYDGWLPNLFVGNLLKGQTVGVIGAGRIGSAYARMMVEGFKMNLIYFDLYQSTRLEKFVTAYGEFLKANGEAPVTWRRASSMDEVLREADVISLHPVLDKTTFHLVNKESLKAMKKDAILINCSRGPVIDEAALVDHLRDNPMFRVGLDVFEDEPYMKPGLADMKNAIIVPHIASASKWTREGMATLAALNVLGKIKGYPVWSDPNRVEPFLDENVSPPAASPSIVNAKALGNA.

NAD(+) is bound by residues 175-176 (RI), 271-273 (CSR), and Asp-297. The active site involves Arg-273. Glu-302 is an active-site residue. The active-site Proton donor is His-320. Residue 320–323 (HIAS) participates in NAD(+) binding.

Belongs to the D-isomer specific 2-hydroxyacid dehydrogenase family.

The protein resides in the peroxisome. It catalyses the reaction (R)-glycerate + NAD(+) = 3-hydroxypyruvate + NADH + H(+). It participates in photosynthesis; photorespiration; 3-phospho-D-glycerate from glycine: step 3/4. In Cucumis sativus (Cucumber), this protein is Glycerate dehydrogenase (HPR-A).